Here is a 594-residue protein sequence, read N- to C-terminus: UvrABC system protein C (594 aa).

Positions 14–91 (DQPGCYLMKD…IKKYDPKYNI (78 aa)) constitute a GIY-YIG domain. Residues 196 to 231 (KEVRSELEIKMYEASEKLEFERAKELRDQIAHIDAI) form the UVR domain.

It belongs to the UvrC family. Interacts with UvrB in an incision complex.

Its subcellular location is the cytoplasm. Its function is as follows. The UvrABC repair system catalyzes the recognition and processing of DNA lesions. UvrC both incises the 5' and 3' sides of the lesion. The N-terminal half is responsible for the 3' incision and the C-terminal half is responsible for the 5' incision. This Bacillus cereus (strain G9842) protein is UvrABC system protein C.